A 495-amino-acid polypeptide reads, in one-letter code: Acyltransferase abl6 (495 aa).

His-171 acts as the Proton acceptor in catalysis.

This sequence belongs to the plant acyltransferase family.

Functionally, acyltransferase; part of the gene cluster that mediates the biosynthesis of abscisic acid (ABA), a phytohormone that acts antagonistically toward salicylic acid (SA), jasmonic acid (JA) and ethylene (ETH) signaling, to impede plant defense responses. The first step of the pathway catalyzes the reaction from farnesyl diphosphate to alpha-ionylideneethane performed by the alpha-ionylideneethane synthase abl3 via a three-step reaction mechanism involving 2 neutral intermediates, beta-farnesene and allofarnesene. The cytochrome P450 monooxygenase abl1 might then be involved in the conversion of alpha-ionylideneethane to alpha-ionylideneacetic acid. Alpha-ionylideneacetic acid is further converted to abscisic acid in 2 steps involving the cytochrome P450 monooxygenase abl2 and the short-chain dehydrogenase/reductase abl4, via the intermediates 1'-deoxy-ABA or 1',4'-trans-diol-ABA, depending on the order of action of these 2 enzymes. Abl2 is responsible for the hydroxylation of carbon atom C-1' and abl4 might be involved in the oxidation of the C-4' carbon atom. The acyltransferase abl6 seems not essential for the biosynthesis of ABA, but it may acetylate ABA as part of the synthesis of another ABA-related molecule. This is Acyltransferase abl6 from Leptosphaeria maculans (strain JN3 / isolate v23.1.3 / race Av1-4-5-6-7-8) (Blackleg fungus).